The chain runs to 591 residues: MFVLPPPPPRYTVPVAYAAGASNGMAVPVVETNNIISHPEGGCSLQAGEGTYLLRDDLHLATPPPHPSEAPVMNPNPLATVPAPPTSGVKLSLVSIGSRIKTPTPSVDGVGAASLFGDGNPALAAPPVKEGLKRRKPKNNIIKSSSSFVSRVITHETATKRLNDRNPDGLFAFANINRAFQWLDLSAKQKEEPVTKILFTKAHMISHDINELTKSTSHIDVVMGSSAGDIIWYEPMSQKYARINKNGVVNNSPVTHIKWIPGSENLFMAAHANGQLVVYDKEKEDALFAPELGSPSAETMKSSSGRSPLQILKSVNSRNQKTNPVALWKLANQKITQFAFSPDRRHLAVVLEDGSLRVMDYLKEEVLDIFRSYYGGLICVCWSPDGKYIVTGGQDDLVTIWSLPERKIVARCQGHNSWVSAVAFDPWRCDDRTYRFGSVGDDCRLLLWDFSVGMLHRPRVHQANARQRTSMIVSNTQHLNRHRADSGGNRTRSDSQETADTYNSYDPTVRHPVEPRARTALLPPIMSKIVGEDPICWLGFQEDSIMTSSLEGHIRTWDRPREGINDNYSYSPAISASATGSGRADSMMGSL.

WD repeat units lie at residues 249–289 (VNNS…ALFA), 330–371 (LANQ…DIFR), 372–411 (SYYG…IVAR), and 414–458 (GHNS…LHRP). The interval 477–510 (QHLNRHRADSGGNRTRSDSQETADTYNSYDPTVR) is disordered. Over residues 496–506 (QETADTYNSYD) the composition is skewed to polar residues. One copy of the WD 5 repeat lies at 530-567 (VGEDPICWLGFQEDSIMTSSLEGHIRTWDRPREGINDN).

Belongs to the WD repeat creC family. As to quaternary structure, interacts with creB.

Component of the regulatory network controlling carbon source utilization through ubiquitination and deubiquitination involving creA, creB, creC, creD and acrB. Required to prevent the proteolysis of the CreB deubiquitinating enzyme in the absence of carbon catabolite repression. CreB deubiquitinating enzyme stabilized in a complex with the CreC leads to the expression of genes such as those in the proline and quinate pathways. The polypeptide is Probable catabolite repression protein creC (creC) (Aspergillus niger (strain ATCC MYA-4892 / CBS 513.88 / FGSC A1513)).